The following is a 424-amino-acid chain: CinA-like protein (424 aa).

This sequence belongs to the CinA family.

The protein is CinA-like protein of Shewanella frigidimarina (strain NCIMB 400).